Consider the following 70-residue polypeptide: Disintegrin triflavin (70 aa).

The Disintegrin domain maps to 1–70 (GEECDCGSPS…SADCPRWNGL (70 aa)). Intrachain disulfides connect Cys-4-Cys-19, Cys-6-Cys-14, Cys-13-Cys-36, Cys-27-Cys-33, Cys-32-Cys-57, and Cys-45-Cys-64. The short motif at 49 to 51 (RGD) is the Cell attachment site element.

It belongs to the venom metalloproteinase (M12B) family. P-II subfamily. P-IIa sub-subfamily. Monomer. In terms of tissue distribution, expressed by the venom gland.

The protein localises to the secreted. Inhibits fibrinogen interaction with platelets. Acts by binding to alpha-IIb/beta-3 (ITGA2B/ITGB3) on the platelet surface and inhibits aggregation induced by ADP, thrombin, platelet-activating factor and collagen. The polypeptide is Disintegrin triflavin (Protobothrops flavoviridis (Habu)).